The primary structure comprises 166 residues: MNLRQQITQFLTLAYVFSSAFMLWKTLSVIANSHSPIVVVLSGSMEPAFQRGDILFLWNRENRQKVGDIVVYEIDGKSIPIVHRVLREHHNNEKQLLLTKGDNNAVDDLSLYAKKQQYLNQKEDLVGTVKGYLPFIGYVTILISENVYFKYGMLGLLGLSALFSNE.

Topologically, residues 1-9 (MNLRQQITQ) are cytoplasmic. A helical; Signal-anchor for type II membrane protein transmembrane segment spans residues 10–30 (FLTLAYVFSSAFMLWKTLSVI). Over 31–166 (ANSHSPIVVV…LGLSALFSNE (136 aa)) the chain is Lumenal. Active-site charge relay system residues include Ser44, His83, and Asp108. The segment at 152 to 163 (GMLGLLGLSALF) is C-terminal short (CTS) helix.

This sequence belongs to the peptidase S26B family. As to quaternary structure, component of the signal peptidase complex (SPC) composed of a catalytic subunit SEC11 and three accessory subunits SPC1, SPC2 and SPC3. The complex induces a local thinning of the ER membrane which is used to measure the length of the signal peptide (SP) h-region of protein substrates. This ensures the selectivity of the complex towards h-regions shorter than 18-20 amino acids. SPC associates with the translocon complex.

Its subcellular location is the endoplasmic reticulum membrane. It carries out the reaction Cleavage of hydrophobic, N-terminal signal or leader sequences from secreted and periplasmic proteins.. In terms of biological role, catalytic component of the signal peptidase complex (SPC) which catalyzes the cleavage of N-terminal signal sequences from nascent proteins as they are translocated into the lumen of the endoplasmic reticulum. Specifically cleaves N-terminal signal peptides that contain a hydrophobic alpha-helix (h-region) shorter than 18-20 amino acids. The sequence is that of Signal peptidase complex catalytic subunit SEC11 (SEC11) from Candida tropicalis (strain ATCC MYA-3404 / T1) (Yeast).